We begin with the raw amino-acid sequence, 49 residues long: Large ribosomal subunit protein bL33 (49 aa).

Belongs to the bacterial ribosomal protein bL33 family.

The polypeptide is Large ribosomal subunit protein bL33 (Streptococcus suis (strain 98HAH33)).